Reading from the N-terminus, the 229-residue chain is Large ribosomal subunit protein uL1 (229 aa).

This sequence belongs to the universal ribosomal protein uL1 family. As to quaternary structure, part of the 50S ribosomal subunit.

Binds directly to 23S rRNA. The L1 stalk is quite mobile in the ribosome, and is involved in E site tRNA release. Its function is as follows. Protein L1 is also a translational repressor protein, it controls the translation of the L11 operon by binding to its mRNA. The sequence is that of Large ribosomal subunit protein uL1 from Streptococcus pyogenes serotype M1.